The sequence spans 115 residues: MRLLTILALCCVAIWVVESIGIEVLHETICVSLRTQRIPIQKIKTYTIKEGAMRAVIFVTKRGLRICADPDAGWTKAAITTLDKKNKKNKQKFNTTTVIPTQVPVSTNETTTVYG.

Positions 1–19 (MRLLTILALCCVAIWVVES) are cleaved as a signal peptide. An intrachain disulfide couples cysteine 30 to cysteine 67.

Belongs to the intercrine gamma family. As to quaternary structure, interacts with host XCR1. In terms of processing, N-glycosylated and O-glycosylated.

The protein localises to the secreted. In terms of biological role, chemoattractant for CD4-dendritic cells, but not for CD4+ dendritic cells, T-cells or B-cells. This Rat cytomegalovirus (isolate England) (RCMV-E) protein is Viral Lymphotactin (vXCL1).